A 579-amino-acid chain; its full sequence is MISNSVIQIGIFLVVLMACVVPLGRYMAKVYGENPPLQGFFGPIERLIYRLLGIDAKSEMHWKHYALALLGFNAMGMLLLYGLQRMQAWLPLNPQQLPAVSADSAFNTAASFVSNTNWQGYAGETTMSYLTQMLGLTVQNFVSAATGMAVLIGLIRGIARRSTSTIGNFWVDLTRSTIYILLPLALVLSVTLVSQGVVQTFSPSQTVELIQPIVNADGTTISQQTIALGPAASQIAIKQLGTNGGGFFNVNSAHPLENPTPLSNFLELLSILLIPAALCYTFGLMVGDKRQGWAILATMTIILLGFTVLAVSAEQAGNPLYQKLGVDDQASALQAGGNLEGKETRFGIVNSALWATVTTAASNGSVNSMHDSYTPLGGLAPMVLMQLGEVVFGGVGSGLYGMLIFAIIAVFVAGLMVGRTPEYLGKKIEAFEMKMAALIILIPCVMTLLITAIAVSSESGRATVFNSGAHGFSEVLYAATSAANNNGSAFAGLGANTPFYNTWLGIAMLVSRFWLIVPTLAIAGSLAGKKLIPQSAGTLPTHTPLFVSLLIGVVLIVGALTFIPALALGPIVEHLLLSL.

Transmembrane regions (helical) follow at residues 1 to 21 (MISNSVIQIGIFLVVLMACVV), 64 to 84 (HYALALLGFNAMGMLLLYGLQ), 135 to 155 (GLTVQNFVSAATGMAVLIGLI), 178 to 198 (IYILLPLALVLSVTLVSQGVV), 265 to 285 (FLELLSILLIPAALCYTFGLM), 293 to 313 (WAILATMTIILLGFTVLAVSA), 398 to 418 (GLYGMLIFAIIAVFVAGLMVG), 435 to 455 (MAALIILIPCVMTLLITAIAV), 503 to 523 (WLGIAMLVSRFWLIVPTLAIA), and 549 to 569 (LLIGVVLIVGALTFIPALALG).

The protein belongs to the KdpA family. The system is composed of three essential subunits: KdpA, KdpB and KdpC.

The protein localises to the cell membrane. In terms of biological role, part of the high-affinity ATP-driven potassium transport (or Kdp) system, which catalyzes the hydrolysis of ATP coupled with the electrogenic transport of potassium into the cytoplasm. This subunit binds the extracellular potassium ions and delivers the ions to the membrane domain of KdpB through an intramembrane tunnel. The protein is Potassium-transporting ATPase potassium-binding subunit of Herpetosiphon aurantiacus (strain ATCC 23779 / DSM 785 / 114-95).